Reading from the N-terminus, the 272-residue chain is Tropinone reductase-like 1 (272 aa).

17–41 provides a ligand contact to NAD(+); that stretch reads IITGGASGIGACTAELFHENGAKVV. Position 150 (Ser-150) interacts with substrate. Catalysis depends on Tyr-163, which acts as the Proton acceptor.

The protein belongs to the short-chain dehydrogenases/reductases (SDR) family.

Its function is as follows. Has no tropinone reductase activity. The protein is Tropinone reductase-like 1 of Erythroxylum coca (Coca plant).